The sequence spans 156 residues: Small ribosomal subunit protein uS7 (156 aa).

It belongs to the universal ribosomal protein uS7 family. In terms of assembly, part of the 30S ribosomal subunit. Contacts proteins S9 and S11.

One of the primary rRNA binding proteins, it binds directly to 16S rRNA where it nucleates assembly of the head domain of the 30S subunit. Is located at the subunit interface close to the decoding center, probably blocks exit of the E-site tRNA. In Shewanella loihica (strain ATCC BAA-1088 / PV-4), this protein is Small ribosomal subunit protein uS7.